The sequence spans 180 residues: Small ribosomal subunit protein uS5 (180 aa).

Positions 13–76 (LEERVVQINR…EAAKKNLIRV (64 aa)) constitute an S5 DRBM domain.

It belongs to the universal ribosomal protein uS5 family. Part of the 30S ribosomal subunit. Contacts proteins S4 and S8.

Its function is as follows. With S4 and S12 plays an important role in translational accuracy. Functionally, located at the back of the 30S subunit body where it stabilizes the conformation of the head with respect to the body. In Roseiflexus sp. (strain RS-1), this protein is Small ribosomal subunit protein uS5.